The chain runs to 252 residues: Glycerol-3-phosphate acyltransferase (252 aa).

The next 6 membrane-spanning stretches (helical) occupy residues 6–26 (SVAM…YLIG), 66–86 (ILTL…TYII), 104–124 (AILV…PIFF), 140–160 (ITID…ILLI), 164–184 (MSLS…IPGI), and 204–224 (VIKG…ILIY).

It belongs to the PlsY family. As to quaternary structure, probably interacts with PlsX.

The protein localises to the cell membrane. It catalyses the reaction an acyl phosphate + sn-glycerol 3-phosphate = a 1-acyl-sn-glycero-3-phosphate + phosphate. Its pathway is lipid metabolism; phospholipid metabolism. Its function is as follows. Catalyzes the transfer of an acyl group from acyl-phosphate (acyl-PO(4)) to glycerol-3-phosphate (G3P) to form lysophosphatidic acid (LPA). This enzyme utilizes acyl-phosphate as fatty acyl donor, but not acyl-CoA or acyl-ACP. The polypeptide is Glycerol-3-phosphate acyltransferase (Ureaplasma urealyticum serovar 10 (strain ATCC 33699 / Western)).